The sequence spans 312 residues: HPr kinase/phosphorylase (312 aa).

Residues His139 and Lys160 contribute to the active site. 154–161 (GRSGIGKS) is an ATP binding site. Ser161 provides a ligand contact to Mg(2+). Asp178 (proton acceptor; for phosphorylation activity. Proton donor; for dephosphorylation activity) is an active-site residue. The tract at residues 201–210 (MEIRGLGIIN) is important for the catalytic mechanism of both phosphorylation and dephosphorylation. Mg(2+) is bound at residue Glu202. The active site involves Arg245. The tract at residues 266-271 (PISPGR) is important for the catalytic mechanism of dephosphorylation.

The protein belongs to the HPrK/P family. As to quaternary structure, homohexamer, arranged as bilayered trimers. Mg(2+) serves as cofactor.

The catalysed reaction is [HPr protein]-L-serine + ATP = [HPr protein]-O-phospho-L-serine + ADP + H(+). It catalyses the reaction [HPr protein]-O-phospho-L-serine + phosphate + H(+) = [HPr protein]-L-serine + diphosphate. Its activity is regulated as follows. Contrary to HPrK/P of B.subtilis and other bacteria, that of M.pneumoniae is active as a kinase at very low ATP concentrations in the absence of fructose 1,6-bisphosphate (FBP). Kinase activity is slightly activated by FBP, and inhibited by inorganic phosphate (Pi), but FBP prevents kinase inhibition by Pi. Dephosphorylation of P-Ser-HPr by M.pneumoniae HPrK/P is strictly dependent on the presence of Pi, and is inhibited by FBP. This unique mode of control of HPrK/P activity is proposed to reflect the parasitic lifestyle of M.pneumoniae, that is strictly adapted to its ecological niche on nutrient-rich human mucous membranes. Functionally, is a metabolite-sensitive enzyme that catalyzes the ATP-as well as probably the pyrophosphate-dependent phosphorylation of Ser-47 in HPr, a phosphocarrier protein of the phosphoenolpyruvate-dependent sugar phosphotransferase system (PTS). HprK/P also catalyzes the pyrophosphate-producing, inorganic phosphate-dependent dephosphorylation (phosphorolysis) of seryl-phosphorylated HPr (P-Ser-HPr). The regulatory role of HPrK/P in the physiology of M.pneumoniae is not known yet. The sequence is that of HPr kinase/phosphorylase (hprK) from Mycoplasma pneumoniae (strain ATCC 29342 / M129 / Subtype 1) (Mycoplasmoides pneumoniae).